Reading from the N-terminus, the 198-residue chain is Alpha-S1-casein (198 aa).

The N-terminal stretch at 1 to 15 (MKLLILTCLVASAVA) is a signal peptide. Disordered stretches follow at residues 28 to 47 (QTQRGGSSSSSSSEERLKEE) and 71 to 97 (SESTEQREASSISSSEEVVPKNTEQKH). Ser39, Ser80, Ser81, Ser83, Ser84, and Ser85 each carry phosphoserine.

It belongs to the alpha-casein family. In terms of tissue distribution, mammary gland specific. Secreted in milk.

It is found in the secreted. Important role in the capacity of milk to transport calcium phosphate. This is Alpha-S1-casein (CSN1S1) from Cavia porcellus (Guinea pig).